The chain runs to 186 residues: Transcription factor FapR (186 aa).

A MaoC-like domain is found at 98-168; that stretch reads FTKTQIARGH…YVIEVNSYVR (71 aa).

Belongs to the FapR family.

Functionally, transcriptional factor involved in regulation of membrane lipid biosynthesis by repressing genes involved in fatty acid and phospholipid metabolism. The protein is Transcription factor FapR of Staphylococcus haemolyticus (strain JCSC1435).